A 528-amino-acid chain; its full sequence is Protein MGF 505-7R (528 aa).

ANK repeat units lie at residues 129–158 (ECDL…LLNV), 261–290 (HVNR…VPHK), and 292–322 (IERM…KVKN).

This sequence belongs to the asfivirus MGF 505 family. In terms of assembly, interacts with host STING1. Interacts with host JAK1; this interaction leads to JAK1 degradation. Interacts with host JAK2; this interaction leads to JAK2 degradation. Interacts with host RELA; this interaction inhibits NF-kappa-B promoter activity.

The protein resides in the host cytoplasm. In terms of biological role, plays a role in virus cell tropism, and may be required for efficient virus replication in macrophages. Interferes with host NF-kappa-B promoter activity mediated by TLR8. Mechanistically, inhibits the phosphorylation and subsequent nuclear translocation of host NF-kappa-B RELA subunit downstream of TLR8. Promotes the expression of the autophagy-related protein host ULK1 to degrade host STING and inhibit the interferon response. Also inhibits JAK1- and JAK2-mediated signaling and thus negatively regulates the IFN-gamma signaling. This is Protein MGF 505-7R from Ornithodoros (relapsing fever ticks).